A 151-amino-acid polypeptide reads, in one-letter code: 1,4-dihydroxy-2-naphthoyl-CoA hydrolase (151 aa).

The active site involves aspartate 19.

Belongs to the 4-hydroxybenzoyl-CoA thioesterase family. DHNA-CoA hydrolase subfamily.

It carries out the reaction 1,4-dihydroxy-2-naphthoyl-CoA + H2O = 1,4-dihydroxy-2-naphthoate + CoA + H(+). The protein operates within cofactor biosynthesis; phylloquinone biosynthesis. It participates in quinol/quinone metabolism; 1,4-dihydroxy-2-naphthoate biosynthesis; 1,4-dihydroxy-2-naphthoate from chorismate: step 7/7. Functionally, catalyzes the hydrolysis of 1,4-dihydroxy-2-naphthoyl-CoA (DHNA-CoA) to 1,4-dihydroxy-2-naphthoate (DHNA), a reaction involved in phylloquinone (vitamin K1) biosynthesis. The protein is 1,4-dihydroxy-2-naphthoyl-CoA hydrolase of Prochlorococcus marinus (strain MIT 9313).